The following is a 433-amino-acid chain: Adenylosuccinate synthetase (433 aa).

GTP is bound by residues 11 to 17 (GDEGKGK) and 39 to 41 (GHT). The active-site Proton acceptor is the aspartate 12. Mg(2+)-binding residues include aspartate 12 and glycine 39. IMP is bound by residues 12 to 15 (DEGK), 37 to 40 (NAGH), threonine 134, arginine 148, asparagine 230, threonine 245, and arginine 309. The active-site Proton donor is histidine 40. Residue 305 to 311 (VTTGRKR) coordinates substrate. GTP-binding positions include arginine 311, 337–339 (KLD), and 419–421 (GTG).

The protein belongs to the adenylosuccinate synthetase family. In terms of assembly, homodimer. Mg(2+) is required as a cofactor.

The protein localises to the cytoplasm. It carries out the reaction IMP + L-aspartate + GTP = N(6)-(1,2-dicarboxyethyl)-AMP + GDP + phosphate + 2 H(+). It functions in the pathway purine metabolism; AMP biosynthesis via de novo pathway; AMP from IMP: step 1/2. Its function is as follows. Plays an important role in the de novo pathway and in the salvage pathway of purine nucleotide biosynthesis. Catalyzes the first committed step in the biosynthesis of AMP from IMP. In Eremothecium gossypii (strain ATCC 10895 / CBS 109.51 / FGSC 9923 / NRRL Y-1056) (Yeast), this protein is Adenylosuccinate synthetase.